Here is a 260-residue protein sequence, read N- to C-terminus: WUSCHEL-related homeobox 2 (260 aa).

A DNA-binding region (homeobox; WUS-type) is located at residues 10–74 (ASSSRWNPTK…NHKARQRQKQ (65 aa)).

It belongs to the WUS homeobox family.

The protein localises to the nucleus. Its function is as follows. Probable transcription factor involved in embryonic patterning. Required for apical embryo development after fertilization. Its specific localization to the apical daughter cell of the zygote, while WOX8 is confined to the basal cell, suggests that the asymmetric division of the plant zygote separates determinants of apical and basal cell fates. This chain is WUSCHEL-related homeobox 2 (WOX2), found in Arabidopsis thaliana (Mouse-ear cress).